An 851-amino-acid polypeptide reads, in one-letter code: DNA mismatch repair protein MutS (851 aa).

Residue 602 to 609 coordinates ATP; it reads GPNMSGKS.

Belongs to the DNA mismatch repair MutS family.

In terms of biological role, this protein is involved in the repair of mismatches in DNA. It is possible that it carries out the mismatch recognition step. This protein has a weak ATPase activity. In Streptococcus pyogenes serotype M28 (strain MGAS6180), this protein is DNA mismatch repair protein MutS.